The primary structure comprises 118 residues: Actin depolymerizing factor ADF (118 aa).

One can recognise an ADF-H domain in the interval 4–118 (GMGVDENCVA…HEMGDLAPLA (115 aa)).

The protein belongs to the actin-binding proteins ADF family. Interacts with ACT1 (G-actin); the interaction results in inhibition of actin polymerization. Interacts with DPA; the interaction enhances ADF activity in disassembly of filamentous actin and inhibition of actin polymerization.

It localises to the cytoplasm. Inhibits actin polymerization. Promotes actin depolymerization. Strongly sequesters actin monomers (G-actin). Weakly severs actin filaments (F-actin). The protein is Actin depolymerizing factor ADF of Toxoplasma gondii.